A 362-amino-acid chain; its full sequence is Bifunctional chorismate mutase/prephenate dehydratase (362 aa).

A Chorismate mutase domain is found at 1-92 (MEELKELRKE…ACLSLEKKIK (92 aa)). Substrate-binding residues include Arg-8, Arg-25, Lys-36, and Glu-49. A Prephenate dehydratase domain is found at 93–267 (VAYLGPKATF…NFTRFLVIAK (175 aa)). The 78-residue stretch at 279-356 (SILFGVKDEP…QFLKVLGSYP (78 aa)) folds into the ACT domain.

The protein localises to the cytoplasm. The catalysed reaction is chorismate = prephenate. It carries out the reaction prephenate + H(+) = 3-phenylpyruvate + CO2 + H2O. Its pathway is amino-acid biosynthesis; L-phenylalanine biosynthesis; phenylpyruvate from prephenate: step 1/1. It functions in the pathway metabolic intermediate biosynthesis; prephenate biosynthesis; prephenate from chorismate: step 1/1. Catalyzes the Claisen rearrangement of chorismate to prephenate and the decarboxylation/dehydration of prephenate to phenylpyruvate. This chain is Bifunctional chorismate mutase/prephenate dehydratase (pheA), found in Aquifex aeolicus (strain VF5).